The primary structure comprises 561 residues: Fusion glycoprotein F0 (561 aa).

Positions M1–G26 are cleaved as a signal peptide. Over I27 to S495 the chain is Extracellular. 5 disulfide bridges follow: C71/C192, C331/C340, C355/C363, C387/C392, and C394/C417. Residues N72 and N80 are each glycosylated (N-linked (GlcNAc...) asparagine; by host). The fusion peptide stretch occupies residues F110–V134. Residues V135–S163 are a coiled coil. The N-linked (GlcNAc...) asparagine; by host glycan is linked to N359. Residues N434, N440, and N464 are each glycosylated (N-linked (GlcNAc...) asparagine; by host). A coiled-coil region spans residues Q459–A484. A helical transmembrane segment spans residues V496–V516. At Q517–H561 the chain is on the cytoplasmic side.

This sequence belongs to the paramyxoviruses fusion glycoprotein family. As to quaternary structure, homotrimer of disulfide-linked F1-F2. Post-translationally, the inactive precursor F0 is glycosylated and proteolytically cleaved into F1 and F2 to be functionally active. The cleavage is mediated by cellular proteases during the transport and maturation of the polypeptide.

It is found in the virion membrane. The protein localises to the host cell membrane. Functionally, class I viral fusion protein. Under the current model, the protein has at least 3 conformational states: pre-fusion native state, pre-hairpin intermediate state, and post-fusion hairpin state. During viral and plasma cell membrane fusion, the heptad repeat (HR) regions assume a trimer-of-hairpins structure, positioning the fusion peptide in close proximity to the C-terminal region of the ectodomain. The formation of this structure appears to drive apposition and subsequent fusion of viral and plasma cell membranes. Directs fusion of viral and cellular membranes leading to delivery of the nucleocapsid into the cytoplasm. This fusion is pH independent and occurs directly at the outer cell membrane. The trimer of F1-F2 (F protein) probably interacts with HN at the virion surface. Upon HN binding to its cellular receptor, the hydrophobic fusion peptide is unmasked and interacts with the cellular membrane, inducing the fusion between cell and virion membranes. Later in infection, F proteins expressed at the plasma membrane of infected cells could mediate fusion with adjacent cells to form syncytia, a cytopathic effect that could lead to tissue necrosis. This Simiiformes (SV41) protein is Fusion glycoprotein F0 (F).